Reading from the N-terminus, the 267-residue chain is Small ribosomal subunit protein uS2c (267 aa).

The segment at 237–267 (KQKIKKTGVKISGNRRTSSITKKRNPASSKI) is disordered. Residues 250–267 (NRRTSSITKKRNPASSKI) are compositionally biased toward polar residues.

It belongs to the universal ribosomal protein uS2 family.

It is found in the plastid. The protein resides in the chloroplast. The protein is Small ribosomal subunit protein uS2c (rps2) of Chlorella vulgaris (Green alga).